We begin with the raw amino-acid sequence, 745 residues long: Kinesin-like protein KIN-14M (745 aa).

The segment at 1 to 31 is disordered; the sequence is MVGEMTNNGRIRPSFPVKDLTSNEGSEYGGP. The globular stretch occupies residues 1–35; the sequence is MVGEMTNNGRIRPSFPVKDLTSNEGSEYGGPVEFT. Microtubule-binding regions lie at residues 65–77 and 198–745; these read YVKR…RWFQ and SLQL…LSLG. Coiled-coil stretches lie at residues 76 to 223 and 259 to 389; these read FQEL…GEKE and KDEL…GNIR. The 338-residue stretch at 387–724 folds into the Kinesin motor domain; that stretch reads NIRVFCRVRP…LRFAARVNAC (338 aa). 472–479 provides a ligand contact to ATP; sequence GQTGSGKT.

This sequence belongs to the TRAFAC class myosin-kinesin ATPase superfamily. Kinesin family. KIN-14 subfamily. Bind to microtubules in an ATP-insensitive manner (in vitro). Homodimer and heterodimer with KIN14N/KATC (in vitro).

The protein localises to the cytoplasm. It localises to the cytoskeleton. This chain is Kinesin-like protein KIN-14M, found in Arabidopsis thaliana (Mouse-ear cress).